The chain runs to 115 residues: Photosystem II reaction center Psb28 protein (115 aa).

Belongs to the Psb28 family. Part of the photosystem II complex.

Its subcellular location is the plastid. The protein resides in the chloroplast thylakoid membrane. This Pyropia yezoensis (Susabi-nori) protein is Photosystem II reaction center Psb28 protein.